Reading from the N-terminus, the 178-residue chain is Ribosome maturation factor RimP (178 aa).

Belongs to the RimP family.

The protein resides in the cytoplasm. Required for maturation of 30S ribosomal subunits. This chain is Ribosome maturation factor RimP, found in Corynebacterium glutamicum (strain ATCC 13032 / DSM 20300 / JCM 1318 / BCRC 11384 / CCUG 27702 / LMG 3730 / NBRC 12168 / NCIMB 10025 / NRRL B-2784 / 534).